Consider the following 42-residue polypeptide: Large ribosomal subunit protein eL32 (42 aa).

This sequence belongs to the eukaryotic ribosomal protein eL32 family.

The protein is Large ribosomal subunit protein eL32 (RPL32) of Zea mays (Maize).